The following is a 3432-amino-acid chain: MTKKPGGPGKNRAINMLKRGLPRVFPLVGVKRVVMSLLDGRGPVRFVLALITFFKFTALAPTKALLGRWKAVEKSVAMKHLTSFKRELGTLIDAVNKRGRKQNKRGGNEGSIMWLASLAVVIAYAGAMKLSNFQGKLLMTINNTDIADVIVIPTSKGENRCWVRAIDVGYMCEDTITYECPKLTMGNDPEDVDCWCDNQEVYVQYGRCTRTRHSKRSRRSVSVQTHGESSLVNKKEAWLDSTKATRYLMKTENWIIRNPGYAFLAATLGWMLGSNNGQRVVFTILLLLVAPAYSFNCLGMGNRDFIEGASGATWVDLVLEGDSCLTIMANDKPTLDVRMINIEASQLAEVRSYCYHASVTDISTVARCPTTGEAHNEKRADSSYVCKQGFTDRGWGNGCGLFGKGSIDTCAKFSCTSKAIGRTIQPENIKYEVGIFVHGTTTSENHGNYSAQVGASQAAKFTITPNAPSITLKLGDYGEVTLDCEPRSGLNTEAFYVMTVGSKSFLVHREWFHDLALPWTSPSSTAWRNRELLMEFEEAHATKQSVVALGSQEGGLHQALAGAIVVEYSSSVKLTSGHLKCRLKMDKLALKGTTYGMCTEKFSFAKNPADTGHGTVVIELSYSGSDGPCKIPIVSVASLNDMTPVGRLVTVNPFVATSSANSKVLVEMEPPFGDSYIVVGRGDKQINHHWHKAGSTLGKAFSTTLKGAQRLAALGDTAWDFGSIGGVFNSIGKAVHQVFGGAFRTLFGGMSWITQGLMGALLLWMGVNARDRSIALAFLATGGVLVFLATNVHADTGCAIDITRKEMRCGSGIFVHNDVEAWVDRYKYLPETPRSLAKIVHKAHKEGVCGVRSVTRLEHQMWEAVRDELNVLLKENAVDLSVVVNKPVGRYRSAPKRLSMTQEKFEMGWKAWGKSILFAPELANSTFVVDGPETKECPDEHRAWNSMQIEDFGFGITSTRVWLKIREESTDECDGAIIGTAVKGHVAVHSDLSYWIESRYNDTWKLERAVFGEVKSCTWPETHTLWGDGVEESELIIPHTIAGPKSKHNRREGYKTQNQGPWDENGIVLDFDYCPGTKVTITEDCGKRGPSVRTTTDSGKLITDWCCRSCSLPPLRFRTENGCWYGMEIRPVRHDETTLVRSQVDAFNGEMVDPFQLGLLVMFLATQEVLRKRWTARLTIPAVLGALLVLMLGGITYTDLARYVVLVAAAFAEANSGGDVLHLALIAVFKIQPAFLVMNMLSTRWTNQENVVLVLGAALFQLASVDLQIGVHGILNAAAIAWMIVRAITFPTTSSVTMPVLALLTPGMRALYLDTYRIILLVIGICSLLQERKKTMAKKKGAVLLGLALTSTGWFSPTTIAAGLMVCNPNKKRGWPATEFLSAVGLMFAIVGGLAELDIESMSIPFMLAGLMAVSYVVSGKATDMWLERAADISWEMDAAITGSSRRLDVKLDDDGDFHLIDDPGVPWKVWVLRMSCIGLAALTPWAIVPAAFGYWLTLKTTKRGGVFWDTPSPKPCSKGDTTTGVYRIMARGILGTYQAGVGVMYENVFHTLWHTTRGAAIMSGEGKLTPYWGSVKEDRIAYGGPWRFDRKWNGTDDVQVIVVEPGKAAVNIQTKPGVFRTPFGEVGAVSLDYPRGTSGSPILDSNGDIIGLYGNGVELGDGSYVSAIVQGDRQEEPVPEAYTPNMLRKRQMTVLDLHPGSGKTRKILPQIIKDAIQQRLRTAVLAPTRVVAAEMAEALRGLPVRYQTSAVQREHQGNEIVDVMCHATLTHRLMSPNRVPNYNLFVMDEAHFTDPASIAARGYIATKVELGEAAAIFMTATPPGTTDPFPDSNAPIHDLQDEIPDRAWSSGYEWITEYAGKTVWFVASVKMGNEIAMCLQRAGKKVIQLNRKSYDTEYPKCKNGDWDFVITTDISEMGANFGASRVIDCRKSVKPTILEEGEGRVILGNPSPITSASAAQRRGRVGRNPNQVGDEYHYGGATSEDDSNLAHWTEAKIMLDNIHMPNGLVAQLYGPEREKAFTMDGEYRLRGEEKKNFLELLRTADLPVWLAYKVASNGIQYTDRRWCFDGPRTNAILEDNTEVEIVTRMGERKILKPRWLDARVYADHQALKWFKDFAAGKRSAISFIEVLGRMPEHFMGKTREALDTMYLVATAEKGGKAHRMALEELPDALETITLIVAITVMTGGFFLLMMQRKGIGKMGLGALVLTLATFFLWAAEVPGTKIAGTLLIALLLMVVLIPEPEKQRSQTDNQLAVFLICVLTVVGVVAANEYGMLEKTKADLKSMFVGKTQASGLTGLPSMALDLRPATAWALYGGSTVVLTPLLKHLITSEYVTTSLASINSQAGSLFVLPRGVPFTDLDLTVGLVFLGCWGQITLTTFLTAMVLATLHYGYMLPGWQAEALRAAQRRTAAGIMKNAVVDGMVATDVPELERTTPLMQKKVGQVLLIGVSVAAFLVNPNVTTVREAGVLVTAATLTLWDNGASAVWNSTTATGLCHVMRGSYLAGGSIAWTLIKNADKPSLKRGRPGGRTLGEQWKEKLNAMSREEFFKYRREAIIEVDRTEARRARRENNIVGGHPVSRGSAKLRWLVEKGFVSPIGKVIDLGCGRGGWSYYAATLKKVQEVRGYTKGGAGHEEPMLMQSYGRNLVSLKSGVDVFYKPSEPSDTLFCDIGESSPSPEVEEQRTLRVLEMTSDWLHRGPREFCIKVLCPYMPKVIEKMEVLQRRFGGGLVRLPLSRNSNHEMYWVSGAAGNVVHAVNMTSQVLLGRMDRTVWRGPKYEEDVNLGSGTRAVGKGEVHSNQEKIKKRIQKLKEEFATTWHKDPEHPYRTWTYHGSYEVKATGSASSLVNGVVKLMSKPWDAIANVTTMAMTDTTPFGQQRVFKEKVDTKAPEPPAGAKEVLNETTNWLWAHLSREKRPRLCTKEEFIKKVNSNAALGAVFAEQNQWSTAREAVDDPRFWEMVDEERENHLRGECHTCIYNMMGKREKKPGEFGKAKGSRAIWFMWLGARYLEFEALGFLNEDHWLSRENSGGGVEGSGVQKLGYILRDIAGKQGGKMYADDTAGWDTRITRTDLENEAKVLELLDGEHRMLARAIIELTYRHKVVKVMRPAAEGKTVMDVISREDQRGSGQVVTYALNTFTNIAVQLVRLMEAEGVIGPQHLEQLPRKTKIAVRTWLFENGEERVTRMAISGDDCVVKPLDDRFATALHFLNAMSKVRKDIQEWKPSHGWHDWQQVPFCSNHFQEIVMKDGRSIVVPCRGQDELIGRARISPGAGWNVKDTACLAKAYAQMWLLLYFHRRDLRLMANAICSAVPVDWVPTGRTSWSIHSKGEWMTTEDMLQVWNRVWIEENEWMMDKTPITSWTDVPYVGKREDIWCGSLIGTRSRATWAENIYAAINQVRAVIGKENYVDYMTSLRRYEDVLIQEDRVI.

Residues 2–15 (TKKPGGPGKNRAIN) are interaction with host EXOC1. The Cytoplasmic portion of the chain corresponds to 2 to 109 (TKKPGGPGKN…RKQNKRGGNE (108 aa)). Residues 37–72 (LLDGRGPVRFVLALITFFKFTALAPTKALLGRWKAV) are hydrophobic; homodimerization of capsid protein C. Positions 106–127 (GGNEGSIMWLASLAVVIAYAGA) are cleaved as a propeptide — ER anchor for the capsid protein C, removed in mature form by serine protease NS3. A helical transmembrane segment spans residues 110 to 130 (GSIMWLASLAVVIAYAGAMKL). The Extracellular segment spans residues 131–253 (SNFQGKLLMT…ATRYLMKTEN (123 aa)). A glycan (N-linked (GlcNAc...) asparagine; by host) is linked at Asn142. A helical transmembrane segment spans residues 254-274 (WIIRNPGYAFLAATLGWMLGS). Residues 275-279 (NNGQR) are Cytoplasmic-facing. A helical membrane pass occupies residues 280–294 (VVFTILLLLVAPAYS). Over 295–746 (FNCLGMGNRD…QVFGGAFRTL (452 aa)) the chain is Extracellular. 6 disulfides stabilise this stretch: Cys297-Cys324, Cys354-Cys410, Cys354-Cys415, Cys368-Cys399, Cys386-Cys410, and Cys386-Cys415. Positions 392–405 (DRGWGNGCGLFGKG) are fusion peptide. A glycan (N-linked (GlcNAc...) asparagine; by host) is linked at Asn448. 2 cysteine pairs are disulfide-bonded: Cys484-Cys581 and Cys598-Cys629. The chain crosses the membrane as a helical span at residues 747 to 767 (FGGMSWITQGLMGALLLWMGV). Residues 768–773 (NARDRS) are Cytoplasmic-facing. A helical membrane pass occupies residues 774 to 794 (IALAFLATGGVLVFLATNVHA). The Extracellular segment spans residues 795 to 1219 (DTGCAIDITR…AFAEANSGGD (425 aa)). Intrachain disulfides connect Cys798–Cys809, Cys849–Cys937, Cys973–Cys1017, Cys1074–Cys1123, Cys1085–Cys1106, and Cys1107–Cys1110. Asn924 and Asn1001 each carry an N-linked (GlcNAc...) asparagine; by host glycan. A helical transmembrane segment spans residues 1220–1240 (VLHLALIAVFKIQPAFLVMNM). The Cytoplasmic segment spans residues 1241–1250 (LSTRWTNQEN). A helical membrane pass occupies residues 1251–1271 (VVLVLGAALFQLASVDLQIGV). A topological domain (lumenal) is located at residue His1272. The chain crosses the membrane as a helical span at residues 1273–1293 (GILNAAAIAWMIVRAITFPTT). Over 1294–1309 (SSVTMPVLALLTPGMR) the chain is Cytoplasmic. The chain crosses the membrane as a helical span at residues 1310–1330 (ALYLDTYRIILLVIGICSLLQ). The Lumenal portion of the chain corresponds to 1331 to 1341 (ERKKTMAKKKG). The chain crosses the membrane as a helical span at residues 1342–1362 (AVLLGLALTSTGWFSPTTIAA). At 1363–1374 (GLMVCNPNKKRG) the chain is on the cytoplasmic side. A helical membrane pass occupies residues 1375 to 1395 (WPATEFLSAVGLMFAIVGGLA). The Lumenal segment spans residues 1396 to 1398 (ELD). A helical membrane pass occupies residues 1399–1419 (IESMSIPFMLAGLMAVSYVVS). At 1420 to 1476 (GKATDMWLERAADISWEMDAAITGSSRRLDVKLDDDGDFHLIDDPGVPWKVWVLRMS) the chain is on the cytoplasmic side. The segment at 1427–1466 (LERAADISWEMDAAITGSSRRLDVKLDDDGDFHLIDDPGV) is interacts with and activates NS3 protease. An intramembrane region (helical) is located at residues 1477–1497 (CIGLAALTPWAIVPAAFGYWL). Topologically, residues 1498-2173 (TLKTTKRGGV…RMALEELPDA (676 aa)) are cytoplasmic. The Peptidase S7 domain occupies 1505–1682 (GGVFWDTPSP…DRQEEPVPEA (178 aa)). Active-site charge relay system; for serine protease NS3 activity residues include His1555, Asp1579, and Ser1639. The Helicase ATP-binding domain maps to 1685 to 1841 (PNMLRKRQMT…DSNAPIHDLQ (157 aa)). Residues 1689-1692 (RKRQ) are important for RNA-binding. 1698–1705 (LHPGSGKT) is an ATP binding site. Positions 1789 to 1792 (DEAH) match the DEAH box motif. Residues 1852–2017 (GYEWITEYAG…GLVAQLYGPE (166 aa)) enclose the Helicase C-terminal domain. Position 1893 is an N6-acetyllysine; by host (Lys1893). A disordered region spans residues 1950–1971 (NPSPITSASAAQRRGRVGRNPN). The tract at residues 2168–2172 (EELPD) is regulates the ATPase activity of NS3 helicase. The helical transmembrane segment at 2174–2194 (LETITLIVAITVMTGGFFLLM) threads the bilayer. At 2195–2199 (MQRKG) the chain is on the lumenal side. An intramembrane region (helical) is located at residues 2200–2220 (IGKMGLGALVLTLATFFLWAA). Position 2221 (Glu2221) is a topological domain, lumenal. A helical transmembrane segment spans residues 2222-2242 (VPGTKIAGTLLIALLLMVVLI). Residues 2243-2257 (PEPEKQRSQTDNQLA) lie on the Cytoplasmic side of the membrane. The helical transmembrane segment at 2258 to 2278 (VFLICVLTVVGVVAANEYGML) threads the bilayer. Residues 2279 to 2311 (EKTKADLKSMFVGKTQASGLTGLPSMALDLRPA) are Lumenal-facing. Positions 2312 to 2332 (TAWALYGGSTVVLTPLLKHLI) form an intramembrane region, helical. Residues 2333–2368 (TSEYVTTSLASINSQAGSLFVLPRGVPFTDLDLTVG) lie on the Lumenal side of the membrane. Residues 2369 to 2389 (LVFLGCWGQITLTTFLTAMVL) form a helical membrane-spanning segment. At 2390–2444 (ATLHYGYMLPGWQAEALRAAQRRTAAGIMKNAVVDGMVATDVPELERTTPLMQKK) the chain is on the cytoplasmic side. A helical membrane pass occupies residues 2445-2465 (VGQVLLIGVSVAAFLVNPNVT). Topologically, residues 2466–2469 (TVRE) are lumenal. A helical transmembrane segment spans residues 2470-2490 (AGVLVTAATLTLWDNGASAVW). Over 2491–3432 (NSTTATGLCH…DVLIQEDRVI (942 aa)) the chain is Cytoplasmic. Residues 2528-2793 (GRPGGRTLGE…DVNLGSGTRA (266 aa)) enclose the mRNA cap 0-1 NS5-type MT domain. Ser2583 lines the S-adenosyl-L-methionine pocket. A Phosphoserine modification is found at Ser2583. Catalysis depends on Lys2588, which acts as the For 2'-O-MTase activity. Positions 2613, 2614, 2631, 2632, 2658, and 2659 each coordinate S-adenosyl-L-methionine. The For 2'-O-MTase activity role is filled by Asp2673. Ile2674 is an S-adenosyl-L-methionine binding site. Catalysis depends on for 2'-O-MTase activity residues Lys2709 and Glu2745. Residue Tyr2747 participates in S-adenosyl-L-methionine binding. Zn(2+)-binding residues include Glu2967, His2971, Cys2976, and Cys2979. A RdRp catalytic domain is found at 3057 to 3209 (GKMYADDTAG…KPLDDRFATA (153 aa)). Residues His3244, Cys3260, and Cys3379 each contribute to the Zn(2+) site.

This sequence in the N-terminal section; belongs to the class I-like SAM-binding methyltransferase superfamily. mRNA cap 0-1 NS5-type methyltransferase family. In terms of assembly, homodimer. Interacts (via N-terminus) with host EXOC1 (via C-terminus); this interaction results in EXOC1 degradation through the proteasome degradation pathway. As to quaternary structure, forms heterodimers with envelope protein E in the endoplasmic reticulum and Golgi. Homodimer; in the endoplasmic reticulum and Golgi. Interacts with protein prM. Interacts with non-structural protein 1. Interacts with host HSPA5. In terms of assembly, homodimer; Homohexamer when secreted. Interacts with envelope protein E. NS1 interacts with NS4B. Interacts with host complement protein CFH; this interaction leads to the degradation of C3. As to quaternary structure, interacts (via N-terminus) with serine protease NS3. Forms a heterodimer with serine protease NS3. May form homooligomers. In terms of assembly, forms a heterodimer with NS2B. Interacts with non-structural protein 2A (via N-terminus). Interacts with NS4B. Interacts with unphosphorylated RNA-directed RNA polymerase NS5; this interaction stimulates RNA-directed RNA polymerase NS5 guanylyltransferase activity. Interacts with host ILF2. As to quaternary structure, interacts with serine protease NS3. Homodimer. Interacts with host STAT2; this interaction inhibits the phosphorylation of the latter, and, when all viral proteins are present (polyprotein), targets STAT2 for degradation. Interacts with serine protease NS3. The cofactor is Mn(2+). It depends on Mg(2+) as a cofactor. Post-translationally, specific enzymatic cleavages in vivo yield mature proteins. Cleavages in the lumen of endoplasmic reticulum are performed by host signal peptidase, whereas cleavages in the cytoplasmic side are performed by serine protease NS3. Signal cleavage at the 2K-4B site requires a prior NS3 protease-mediated cleavage at the 4A-2K site. In terms of processing, cleaved in post-Golgi vesicles by a host furin, releasing the mature small envelope protein M, and peptide pr. This cleavage is incomplete as up to 30% of viral particles still carry uncleaved prM. N-glycosylated. Post-translationally, N-glycosylated. The excreted form is glycosylated and this is required for efficient secretion of the protein from infected cells. In terms of processing, acetylated by host KAT5. Acetylation modulates NS3 RNA-binding and unwinding activities and plays an important positive role for viral replication. Phosphorylated on serines residues. This phosphorylation may trigger NS5 nuclear localization.

The protein resides in the virion. It is found in the host nucleus. It localises to the host cytoplasm. The protein localises to the host perinuclear region. Its subcellular location is the secreted. The protein resides in the virion membrane. It is found in the host endoplasmic reticulum membrane. It localises to the host cell surface. The catalysed reaction is Selective hydrolysis of -Xaa-Xaa-|-Yaa- bonds in which each of the Xaa can be either Arg or Lys and Yaa can be either Ser or Ala.. It carries out the reaction RNA(n) + a ribonucleoside 5'-triphosphate = RNA(n+1) + diphosphate. It catalyses the reaction a ribonucleoside 5'-triphosphate + H2O = a ribonucleoside 5'-diphosphate + phosphate + H(+). The enzyme catalyses ATP + H2O = ADP + phosphate + H(+). The catalysed reaction is a 5'-end (5'-triphosphoguanosine)-ribonucleoside in mRNA + S-adenosyl-L-methionine = a 5'-end (N(7)-methyl 5'-triphosphoguanosine)-ribonucleoside in mRNA + S-adenosyl-L-homocysteine. It carries out the reaction a 5'-end (N(7)-methyl 5'-triphosphoguanosine)-ribonucleoside in mRNA + S-adenosyl-L-methionine = a 5'-end (N(7)-methyl 5'-triphosphoguanosine)-(2'-O-methyl-ribonucleoside) in mRNA + S-adenosyl-L-homocysteine + H(+). In terms of biological role, plays a role in virus budding by binding to the cell membrane and gathering the viral RNA into a nucleocapsid that forms the core of a mature virus particle. During virus entry, may induce genome penetration into the host cytoplasm after hemifusion induced by the surface proteins. Can migrate to the cell nucleus where it modulates host functions. Overcomes the anti-viral effects of host EXOC1 by sequestering and degrading the latter through the proteasome degradation pathway. Functionally, inhibits RNA silencing by interfering with host Dicer. Prevents premature fusion activity of envelope proteins in trans-Golgi by binding to envelope protein E at pH 6.0. After virion release in extracellular space, gets dissociated from E dimers. Its function is as follows. Acts as a chaperone for envelope protein E during intracellular virion assembly by masking and inactivating envelope protein E fusion peptide. prM is the only viral peptide matured by host furin in the trans-Golgi network probably to avoid catastrophic activation of the viral fusion activity in acidic Golgi compartment prior to virion release. prM-E cleavage is inefficient, and many virions are only partially matured. These uncleaved prM would play a role in immune evasion. In terms of biological role, may play a role in virus budding. Exerts cytotoxic effects by activating a mitochondrial apoptotic pathway through M ectodomain. May display a viroporin activity. Functionally, binds to host cell surface receptor and mediates fusion between viral and cellular membranes. Efficient virus attachment to cell is, at least in part, mediated by host HSPA5. Envelope protein is synthesized in the endoplasmic reticulum in the form of heterodimer with protein prM. They play a role in virion budding in the ER, and the newly formed immature particle is covered with 60 spikes composed of heterodimer between precursor prM and envelope protein E. The virion is transported to the Golgi apparatus where the low pH causes dissociation of PrM-E heterodimers and formation of E homodimers. prM-E cleavage is inefficient, and many virions are only partially matured. These uncleaved prM would play a role in immune evasion. Involved in immune evasion, pathogenesis and viral replication. Once cleaved off the polyprotein, is targeted to three destinations: the viral replication cycle, the plasma membrane and the extracellular compartment. Essential for viral replication. Required for formation of the replication complex and recruitment of other non-structural proteins to the ER-derived membrane structures. Excreted as a hexameric lipoparticle that plays a role against host immune response. Antagonizing the complement function. Binds to the host macrophages and dendritic cells. Inhibits signal transduction originating from Toll-like receptor 3 (TLR3). Its function is as follows. Component of the viral RNA replication complex that functions in virion assembly and antagonizes the host alpha/beta interferon antiviral response. In terms of biological role, required cofactor for the serine protease function of NS3. May have membrane-destabilizing activity and form viroporins. Functionally, displays three enzymatic activities: serine protease, NTPase and RNA helicase. NS3 serine protease, in association with NS2B, performs its autocleavage and cleaves the polyprotein at dibasic sites in the cytoplasm: C-prM, NS2A-NS2B, NS2B-NS3, NS3-NS4A, NS4A-2K and NS4B-NS5. NS3 RNA helicase binds RNA and unwinds dsRNA in the 3' to 5' direction. Regulates the ATPase activity of the NS3 helicase activity. NS4A allows NS3 helicase to conserve energy during unwinding. Its function is as follows. Functions as a signal peptide for NS4B and is required for the interferon antagonism activity of the latter. In terms of biological role, induces the formation of ER-derived membrane vesicles where the viral replication takes place. Inhibits interferon (IFN)-induced host STAT1 phosphorylation and nuclear translocation, thereby preventing the establishment of cellular antiviral state by blocking the IFN-alpha/beta pathway. Inhibits STAT2 translocation in the nucleus after IFN-alpha treatment. Functionally, replicates the viral (+) and (-) RNA genome, and performs the capping of genomes in the cytoplasm. NS5 methylates viral RNA cap at guanine N-7 and ribose 2'-O positions. Besides its role in RNA genome replication, also prevents the establishment of cellular antiviral state by blocking the interferon-alpha/beta (IFN-alpha/beta) signaling pathway. Inhibits host TYK2 and STAT2 phosphorylation, thereby preventing activation of JAK-STAT signaling pathway. In Ardeidae (herons), this protein is Genome polyprotein.